A 215-amino-acid chain; its full sequence is MSLVSESHAEELVRGAGQLGIPLDDRQQRLLLAYLALLIKWNKAYNLTAVRDPDEMVSRHLLDSLSVVPFVAERGRNWLDVGSGGGMPGVPLAIMFPERAFTLLDSNGKKTRFLTQVKLELKLANLEVVHARVEQFQPSTAFDGITSRAFSSLEDFASWTRHLGNAETRWLAMKGVQPDDELQRLPEDFRLDACHVLKVPGCQGQRHLLILRRTS.

S-adenosyl-L-methionine is bound by residues glycine 82, methionine 87, 133-134 (VE), and arginine 148.

Belongs to the methyltransferase superfamily. RNA methyltransferase RsmG family.

Its subcellular location is the cytoplasm. The catalysed reaction is guanosine(527) in 16S rRNA + S-adenosyl-L-methionine = N(7)-methylguanosine(527) in 16S rRNA + S-adenosyl-L-homocysteine. Its function is as follows. Specifically methylates the N7 position of guanine in position 527 of 16S rRNA. This chain is Ribosomal RNA small subunit methyltransferase G, found in Stutzerimonas stutzeri (strain A1501) (Pseudomonas stutzeri).